Here is a 1185-residue protein sequence, read N- to C-terminus: Mucin-6 (1185 aa).

Cystine bridges form between cysteine 1–cysteine 132 and cysteine 23–cysteine 168. The VWFD 1 domain occupies 1 to 169 (CSTWGGGHFS…KMDDPSEICL (169 aa)). Asparagine 223 carries N-linked (GlcNAc...) (complex) asparagine glycosylation. The 56-residue stretch at 257-312 (CSANQIYEECGSPCIKTCSNPEYSCSSHCTYGCFCPEGTVLDDISKNRTCVHLEQC) folds into the TIL 1 domain. The VWFD 2 domain maps to 350–534 (GRCSLEGGSF…AMERETDPCA (185 aa)). Cystine bridges form between cysteine 352–cysteine 488 and cysteine 374–cysteine 533. TIL domains are found at residues 619–676 (CTGN…KSHC) and 737–782 (GATC…PEEC). A VWFD 3 domain is found at 821–993 (STCNLYGEGH…NSWKENPLCG (173 aa)). Disulfide bonds link cysteine 823–cysteine 957, cysteine 845–cysteine 992, cysteine 854–cysteine 954, and cysteine 872–cysteine 879. Asparagine 930 carries an N-linked (GlcNAc...) (complex) asparagine glycan. Low complexity predominate over residues 1160–1178 (PTATQPTSPSTSSASTVLT). The interval 1160–1185 (PTATQPTSPSTSSASTVLTETTNPPV) is disordered.

Multimer; disulfide-linked. N-glycosylated with N-acetylglucosamine (6.7%), N-acetylgalactosamine (0.6%), galactose (1.8%), mannose (4.6%), N-acetylneuraminic acid (1.0%) and sulfate-containing glycans (0.7%).

Its subcellular location is the secreted. Functionally, ovomucin, the glycoprotein responsible for the gel properties of egg white, is composed for 2 subunits, alpha-ovomucin/MUC5B and beta-ovomucin/MUC6. This is Mucin-6 (MUC6) from Gallus gallus (Chicken).